The primary structure comprises 192 residues: Adenylate kinase (192 aa).

Glycine 10 to threonine 18 provides a ligand contact to ATP.

The protein belongs to the archaeal adenylate kinase family. In terms of assembly, monomer.

Its subcellular location is the cytoplasm. The enzyme catalyses AMP + ATP = 2 ADP. In Methanococcus maripaludis (strain C6 / ATCC BAA-1332), this protein is Adenylate kinase.